Reading from the N-terminus, the 501-residue chain is 2,3-bisphosphoglycerate-independent phosphoglycerate mutase (501 aa).

Positions 12 and 62 each coordinate Mn(2+). Serine 62 serves as the catalytic Phosphoserine intermediate. Substrate is bound by residues histidine 121, 150–151, arginine 182, arginine 188, 253–256, and lysine 323; these read RD and RSDR. Mn(2+)-binding residues include aspartate 390, histidine 394, aspartate 431, histidine 432, and histidine 450.

Belongs to the BPG-independent phosphoglycerate mutase family. As to quaternary structure, monomer. Mn(2+) is required as a cofactor.

It catalyses the reaction (2R)-2-phosphoglycerate = (2R)-3-phosphoglycerate. Its pathway is carbohydrate degradation; glycolysis; pyruvate from D-glyceraldehyde 3-phosphate: step 3/5. In terms of biological role, catalyzes the interconversion of 2-phosphoglycerate and 3-phosphoglycerate. The chain is 2,3-bisphosphoglycerate-independent phosphoglycerate mutase from Ehrlichia canis (strain Jake).